A 681-amino-acid polypeptide reads, in one-letter code: Probable L-type lectin-domain containing receptor kinase S.7 (681 aa).

A signal peptide spans 1–21 (MSLSRKLLVIFFTWITALSMS). The Extracellular segment spans residues 22–305 (KPIFVSSDNM…PSKKRRHRHN (284 aa)). Residues 30 to 265 (NMNFTFKSFT…IHLIENWSFK (236 aa)) form a legume-lectin like region. N-linked (GlcNAc...) asparagine glycans are attached at residues Asn32, Asn42, Asn86, Asn121, Asn135, Asn261, and Asn281. A helical membrane pass occupies residues 306-326 (LAIGLGISCPVLICLALFVFG). The Cytoplasmic portion of the chain corresponds to 327–681 (YFTLKKWKSV…EGDSIVYVVS (355 aa)). The Protein kinase domain occupies 365–643 (FHSSRVIGRG…RVLQILNNEI (279 aa)). ATP-binding positions include 371–379 (IGRGAFGNV) and Lys394. Catalysis depends on Asp493, which acts as the Proton acceptor.

It in the C-terminal section; belongs to the protein kinase superfamily. Ser/Thr protein kinase family. This sequence in the N-terminal section; belongs to the leguminous lectin family.

It is found in the cell membrane. The catalysed reaction is L-seryl-[protein] + ATP = O-phospho-L-seryl-[protein] + ADP + H(+). The enzyme catalyses L-threonyl-[protein] + ATP = O-phospho-L-threonyl-[protein] + ADP + H(+). Functionally, involved in resistance response to the pathogenic oomycetes Phytophthora infestans and Phytophthora capsici. In Arabidopsis thaliana (Mouse-ear cress), this protein is Probable L-type lectin-domain containing receptor kinase S.7.